We begin with the raw amino-acid sequence, 397 residues long: Odorant receptor 59a (397 aa).

Over 1–36 (MAEVRVDSLEFFKSHWTAWRYLGVAHFRVENWKNLY) the chain is Cytoplasmic. The chain crosses the membrane as a helical span at residues 37-57 (VFYSIVSNLLVTLCYPVHLGI). At 58 to 68 (SLFRNRTITED) the chain is on the extracellular side. An N-linked (GlcNAc...) asparagine glycan is attached at Asn62. The helical transmembrane segment at 69–92 (ILNLTTFATCTACSVKCLLYAYNI) threads the bilayer. Over 93–128 (KDVLEMERLLRLLDERVVGPEQRSIYGQVRVQLRNV) the chain is Cytoplasmic. A helical membrane pass occupies residues 129 to 149 (LYVFIGIYMPCALFAELSFLF). Residues 150–179 (KEERGLMYPAWFPFDWLHSTRNYYIANAYQ) are Extracellular-facing. The chain crosses the membrane as a helical span at residues 180–200 (IVGISFQLLQNYVSDCFPAVV). Topologically, residues 201–274 (LCLISSHIKM…IEAFISLPML (74 aa)) are cytoplasmic. A helical membrane pass occupies residues 275–295 (IQFTVTALNVCIGLAALVFFV). Residues 296 to 301 (SEPMAR) lie on the Extracellular side of the membrane. Residues 302–322 (MYFIFYSLAMPLQIFPSCFFG) traverse the membrane as a helical segment. Residues 323-372 (TDNEYWFGRLHYAAFSCNWHTQNRSFKRKMMLFVEQSLKKSTAVAGGMMR) lie on the Cytoplasmic side of the membrane. Residues 373–393 (IHLDTFFSTLKGAYSLFTIII) traverse the membrane as a helical segment. The Extracellular portion of the chain corresponds to 394 to 397 (RMRK).

The protein belongs to the insect chemoreceptor superfamily. Heteromeric odorant receptor channel (TC 1.A.69) family. Or2a subfamily. As to quaternary structure, interacts with Orco. Complexes exist early in the endomembrane system in olfactory sensory neurons (OSNs), coupling these complexes to the conserved ciliary trafficking pathway. As to expression, expressed in neurons of the third antennal segment.

It localises to the cell membrane. Odorant receptor which mediates acceptance or avoidance behavior, depending on its substrates. The odorant receptor repertoire encodes a large collection of odor stimuli that vary widely in identity, intensity, and duration. May form a complex with Orco to form odorant-sensing units, providing sensitive and prolonged odorant signaling and calcium permeability. Involved in the behavioral responses to ethyl acetate, anisole, hexanoic acid, and pyrazines. This Drosophila melanogaster (Fruit fly) protein is Odorant receptor 59a (Or59a).